The primary structure comprises 199 residues: Recombination protein RecR (199 aa).

The C4-type zinc-finger motif lies at 57–72; the sequence is CSVCGNLTDDDPCNIC. Residues 80 to 176 enclose the Toprim domain; it reads STVLVVEDSK…TVTRLARGLA (97 aa).

This sequence belongs to the RecR family.

Functionally, may play a role in DNA repair. It seems to be involved in an RecBC-independent recombinational process of DNA repair. It may act with RecF and RecO. In Streptococcus mutans serotype c (strain ATCC 700610 / UA159), this protein is Recombination protein RecR.